A 283-amino-acid polypeptide reads, in one-letter code: uncharacterized protein (283 aa).

Solcar repeat units lie at residues 14-95 (QPVW…LKHL), 102-185 (NDHA…SEAV), and 190-274 (GLAL…TLQG). Helical transmembrane passes span 20–40 (TLAGGISSVICRFMIAPFDVI), 70–90 (GNVVAELLYLVYGAAEFVAFS), 105–125 (AVNFLCGTSAGIFATLTSYPL), 157–177 (FFPGLKFSVIQIGPYAGCFFM), 184–204 (AVLSPLGLALSSTLSGVIAGA), and 249–266 (GLSVSMLKVAPGRAITML).

It belongs to the mitochondrial carrier (TC 2.A.29) family.

It is found in the mitochondrion inner membrane. This is an uncharacterized protein from Schizosaccharomyces pombe (strain 972 / ATCC 24843) (Fission yeast).